The sequence spans 448 residues: Beta-glucosidase A (448 aa).

The active-site Proton donor is Glu-166. Glu-355 serves as the catalytic Nucleophile.

Belongs to the glycosyl hydrolase 1 family.

The catalysed reaction is Hydrolysis of terminal, non-reducing beta-D-glucosyl residues with release of beta-D-glucose.. Its pathway is glycan metabolism; cellulose degradation. The chain is Beta-glucosidase A (bglA) from Acetivibrio thermocellus (strain ATCC 27405 / DSM 1237 / JCM 9322 / NBRC 103400 / NCIMB 10682 / NRRL B-4536 / VPI 7372) (Clostridium thermocellum).